Consider the following 252-residue polypeptide: 2-succinyl-6-hydroxy-2,4-cyclohexadiene-1-carboxylate synthase (252 aa).

The protein belongs to the AB hydrolase superfamily. MenH family. In terms of assembly, monomer.

It catalyses the reaction 5-enolpyruvoyl-6-hydroxy-2-succinyl-cyclohex-3-ene-1-carboxylate = (1R,6R)-6-hydroxy-2-succinyl-cyclohexa-2,4-diene-1-carboxylate + pyruvate. Its pathway is quinol/quinone metabolism; 1,4-dihydroxy-2-naphthoate biosynthesis; 1,4-dihydroxy-2-naphthoate from chorismate: step 3/7. The protein operates within quinol/quinone metabolism; menaquinone biosynthesis. Catalyzes a proton abstraction reaction that results in 2,5-elimination of pyruvate from 2-succinyl-5-enolpyruvyl-6-hydroxy-3-cyclohexene-1-carboxylate (SEPHCHC) and the formation of 2-succinyl-6-hydroxy-2,4-cyclohexadiene-1-carboxylate (SHCHC). This is 2-succinyl-6-hydroxy-2,4-cyclohexadiene-1-carboxylate synthase from Shigella sonnei (strain Ss046).